The chain runs to 400 residues: Formate-dependent phosphoribosylglycinamide formyltransferase (400 aa).

N(1)-(5-phospho-beta-D-ribosyl)glycinamide-binding positions include 22–23 (EL) and Glu-82. ATP-binding positions include Arg-115, Lys-157, 162-167 (SSGKGQ), 197-200 (EGFI), and Glu-205. The ATP-grasp domain occupies 120 to 315 (RLAAETLGVP…EFELHARAIL (196 aa)). Mg(2+) contacts are provided by Glu-274 and Glu-286. Residues Asp-293, Lys-362, and 369–370 (RR) contribute to the N(1)-(5-phospho-beta-D-ribosyl)glycinamide site.

Belongs to the PurK/PurT family. In terms of assembly, homodimer.

It catalyses the reaction N(1)-(5-phospho-beta-D-ribosyl)glycinamide + formate + ATP = N(2)-formyl-N(1)-(5-phospho-beta-D-ribosyl)glycinamide + ADP + phosphate + H(+). It functions in the pathway purine metabolism; IMP biosynthesis via de novo pathway; N(2)-formyl-N(1)-(5-phospho-D-ribosyl)glycinamide from N(1)-(5-phospho-D-ribosyl)glycinamide (formate route): step 1/1. Its function is as follows. Involved in the de novo purine biosynthesis. Catalyzes the transfer of formate to 5-phospho-ribosyl-glycinamide (GAR), producing 5-phospho-ribosyl-N-formylglycinamide (FGAR). Formate is provided by PurU via hydrolysis of 10-formyl-tetrahydrofolate. This is Formate-dependent phosphoribosylglycinamide formyltransferase from Variovorax paradoxus (strain S110).